A 510-amino-acid polypeptide reads, in one-letter code: Lysine--tRNA ligase (510 aa).

The Mg(2+) site is built by E420 and E427.

The protein belongs to the class-II aminoacyl-tRNA synthetase family. As to quaternary structure, homodimer. Mg(2+) is required as a cofactor.

It localises to the cytoplasm. It catalyses the reaction tRNA(Lys) + L-lysine + ATP = L-lysyl-tRNA(Lys) + AMP + diphosphate. The polypeptide is Lysine--tRNA ligase (Psychrobacter sp. (strain PRwf-1)).